The sequence spans 670 residues: Acetyl-coenzyme A synthetase (670 aa).

Residues 211 to 214 (RGGK) and Thr-329 contribute to the CoA site. ATP-binding positions include 404–406 (GEP), 428–433 (DTYWQT), Asp-519, and Arg-534. A CoA-binding site is contributed by Ser-542. Residue Arg-545 participates in ATP binding. Arg-603 provides a ligand contact to CoA.

The protein belongs to the ATP-dependent AMP-binding enzyme family.

The catalysed reaction is acetate + ATP + CoA = acetyl-CoA + AMP + diphosphate. This Emericella nidulans (strain FGSC A4 / ATCC 38163 / CBS 112.46 / NRRL 194 / M139) (Aspergillus nidulans) protein is Acetyl-coenzyme A synthetase (facA).